Reading from the N-terminus, the 471-residue chain is Mannose-1-phosphate guanylyltransferase (471 aa).

Belongs to the mannose-6-phosphate isomerase type 2 family.

The enzyme catalyses alpha-D-mannose 1-phosphate + GTP + H(+) = GDP-alpha-D-mannose + diphosphate. It participates in nucleotide-sugar biosynthesis; GDP-alpha-D-mannose biosynthesis; GDP-alpha-D-mannose from alpha-D-mannose 1-phosphate (GTP route): step 1/1. The protein operates within bacterial outer membrane biogenesis; LPS O-antigen biosynthesis. Functionally, involved in GDP-mannose biosynthesis which serves as the activated sugar nucleotide precursor for mannose residues in cell surface polysaccharides. This enzyme participates in synthesis of the LPS O9 antigen. The protein is Mannose-1-phosphate guanylyltransferase (manC) of Escherichia coli.